A 183-amino-acid polypeptide reads, in one-letter code: uncharacterized protein (183 aa).

An SIS domain is found at 27-170 (MIKLIDSARS…VAEIMMQKHL (144 aa)).

Belongs to the SIS family. PHI subfamily.

This is an uncharacterized protein from Archaeoglobus fulgidus (strain ATCC 49558 / DSM 4304 / JCM 9628 / NBRC 100126 / VC-16).